Here is a 401-residue protein sequence, read N- to C-terminus: Exodeoxyribonuclease 7 large subunit (401 aa).

This sequence belongs to the XseA family. In terms of assembly, heterooligomer composed of large and small subunits.

Its subcellular location is the cytoplasm. The catalysed reaction is Exonucleolytic cleavage in either 5'- to 3'- or 3'- to 5'-direction to yield nucleoside 5'-phosphates.. Bidirectionally degrades single-stranded DNA into large acid-insoluble oligonucleotides, which are then degraded further into small acid-soluble oligonucleotides. The sequence is that of Exodeoxyribonuclease 7 large subunit from Clostridium botulinum (strain Hall / ATCC 3502 / NCTC 13319 / Type A).